The primary structure comprises 278 residues: Dermonecrotic toxin LlSicTox-alphaIII3iii (278 aa).

His-5 is an active-site residue. The Mg(2+) site is built by Glu-25 and Asp-27. His-40 serves as the catalytic Nucleophile. An intrachain disulfide couples Cys-44 to Cys-50. Position 84 (Asp-84) interacts with Mg(2+).

The protein belongs to the arthropod phospholipase D family. Class I subfamily. Mg(2+) is required as a cofactor. In terms of tissue distribution, expressed by the venom gland.

Its subcellular location is the secreted. The catalysed reaction is an N-(acyl)-sphingosylphosphocholine = an N-(acyl)-sphingosyl-1,3-cyclic phosphate + choline. It catalyses the reaction an N-(acyl)-sphingosylphosphoethanolamine = an N-(acyl)-sphingosyl-1,3-cyclic phosphate + ethanolamine. It carries out the reaction a 1-acyl-sn-glycero-3-phosphocholine = a 1-acyl-sn-glycero-2,3-cyclic phosphate + choline. The enzyme catalyses a 1-acyl-sn-glycero-3-phosphoethanolamine = a 1-acyl-sn-glycero-2,3-cyclic phosphate + ethanolamine. Its function is as follows. Dermonecrotic toxins cleave the phosphodiester linkage between the phosphate and headgroup of certain phospholipids (sphingolipid and lysolipid substrates), forming an alcohol (often choline) and a cyclic phosphate. This toxin acts on sphingomyelin (SM). It may also act on ceramide phosphoethanolamine (CPE), lysophosphatidylcholine (LPC) and lysophosphatidylethanolamine (LPE), but not on lysophosphatidylserine (LPS), and lysophosphatidylglycerol (LPG). It acts by transphosphatidylation, releasing exclusively cyclic phosphate products as second products. Induces dermonecrosis, hemolysis, increased vascular permeability, edema, inflammatory response, and platelet aggregation. This chain is Dermonecrotic toxin LlSicTox-alphaIII3iii, found in Loxosceles laeta (South American recluse spider).